Here is a 339-residue protein sequence, read N- to C-terminus: MIIFFEIWHWSWALLGCYLNLLLTYLAIFRSPKAIKSYATLIINFAATDFVECALDLFIQTRLVAVPGEAKLVYIFNGPCKYTGSLSCKVGLSFLLHCLTHSVWSLLISFGYRFYILHNPALSRLTLLKITIMFYIPSLVQALTYWTLFVPREKILPLAKQWFPYYDLETETGVLTGVIDLTNFVAVYAVAHICLPFFPVYITIFVLRQKIMKYLGGQSQMMSQDTKAAHTQLLRALTTQAIIPMFLGIAVLLYFSSQSGLLKSPILEYSIFSVAILMPALSPITYLYFVRPYRQKVKRIIRHPFKLLSRPHERATSNSGVFYSGDHPTHFSKPVIAVH.

The next 7 membrane-spanning stretches (helical) occupy residues 2–22 (IIFF…LNLL), 39–59 (ATLI…DLFI), 90–110 (VGLS…LISF), 130–150 (ITIM…TLFV), 187–207 (VYAV…IFVL), 242–262 (IIPM…SGLL), and 270–290 (SIFS…LYFV).

The protein belongs to the nematode receptor-like protein srd family.

The protein resides in the membrane. The protein is Serpentine receptor class delta-19 (srd-19) of Caenorhabditis elegans.